We begin with the raw amino-acid sequence, 433 residues long: Xylose isomerase (433 aa).

The Mg(2+) site is built by Asp305 and Asp307.

Belongs to the xylose isomerase family. Homotetramer. The cofactor is Mg(2+).

It is found in the cytoplasm. It carries out the reaction alpha-D-xylose = alpha-D-xylulofuranose. The chain is Xylose isomerase from Cereibacter sphaeroides (strain KD131 / KCTC 12085) (Rhodobacter sphaeroides).